We begin with the raw amino-acid sequence, 404 residues long: 5-azacytidine-induced protein 2 (404 aa).

The segment at 1–198 (MDTLVEDDIC…TELQKARQTG (198 aa)) is homodimerization. Residues 40-198 (ALVTAYEDIK…TELQKARQTG (159 aa)) are a coiled coil. Residues 229–269 (SDHMQHAYWELRREMANLHLVTRVQAELLRQLKTAAAGKAC) are interaction with TBK1 and IKBKE. Residue Ser330 is modified to Phosphoserine. 2 disordered regions span residues 332 to 351 (TDNE…HNSY) and 356 to 390 (LEDN…LPPL). Ser365 carries the post-translational modification Phosphoserine.

As to quaternary structure, homodimer. Interacts with IKBKE, TBK1 and TICAM1. Interacts with TAX1BP1. Interacts with CALCOCO2. Ubiquitinated via 'Lys-48'-linked polyubiquitination by TRIM38, leading to its degradation.

It is found in the cytoplasm. In terms of biological role, adapter protein which binds TBK1 and IKBKE playing a role in antiviral innate immunity. Activates serine/threonine-protein kinase TBK1 and facilitates its oligomerization. Enhances the phosphorylation of NF-kappa-B p65 subunit RELA by TBK1. Promotes TBK1-induced as well as TNF-alpha or PMA-induced activation of NF-kappa-B. Participates in IFNB promoter activation via TICAM1. This Rattus norvegicus (Rat) protein is 5-azacytidine-induced protein 2 (Azi2).